Reading from the N-terminus, the 206-residue chain is Small ribosomal subunit protein eS8 (206 aa).

The disordered stretch occupies residues M1–K37.

Belongs to the eukaryotic ribosomal protein eS8 family. In terms of assembly, component of the small ribosomal subunit. Mature ribosomes consist of a small (40S) and a large (60S) subunit. The 40S subunit contains about 32 different proteins and 1 molecule of RNA (18S). The 60S subunit contains 45 different proteins and 3 molecules of RNA (25S, 5.8S and 5S).

The protein localises to the cytoplasm. Its function is as follows. Component of the ribosome, a large ribonucleoprotein complex responsible for the synthesis of proteins in the cell. The small ribosomal subunit (SSU) binds messenger RNAs (mRNAs) and translates the encoded message by selecting cognate aminoacyl-transfer RNA (tRNA) molecules. The large subunit (LSU) contains the ribosomal catalytic site termed the peptidyl transferase center (PTC), which catalyzes the formation of peptide bonds, thereby polymerizing the amino acids delivered by tRNAs into a polypeptide chain. The nascent polypeptides leave the ribosome through a tunnel in the LSU and interact with protein factors that function in enzymatic processing, targeting, and the membrane insertion of nascent chains at the exit of the ribosomal tunnel. In Candida albicans (strain SC5314 / ATCC MYA-2876) (Yeast), this protein is Small ribosomal subunit protein eS8 (RPS8A).